A 103-amino-acid chain; its full sequence is Histone H4 (103 aa).

The segment covering Met-1–Gly-14 has biased composition (gly residues). Residues Met-1–Arg-20 form a disordered region. Position 2 is an N-acetylserine (Ser-2). N6-acetyl-N6-methyllysine; alternate is present on residues Lys-6 and Lys-13. Lys-17 is modified (N6-acetyllysine). The DNA-binding element occupies Lys-17–Arg-21.

Belongs to the histone H4 family. The nucleosome is a histone octamer containing two molecules each of H2A, H2B, H3 and H4 assembled in one H3-H4 heterotetramer and two H2A-H2B heterodimers. The octamer wraps approximately 147 bp of DNA.

It localises to the nucleus. Its subcellular location is the chromosome. Core component of nucleosome. Nucleosomes wrap and compact DNA into chromatin, limiting DNA accessibility to the cellular machineries which require DNA as a template. Histones thereby play a central role in transcription regulation, DNA repair, DNA replication and chromosomal stability. DNA accessibility is regulated via a complex set of post-translational modifications of histones, also called histone code, and nucleosome remodeling. The protein is Histone H4 of Mytilus chilensis (Chilean blue mussel).